We begin with the raw amino-acid sequence, 155 residues long: Small ribosomal subunit protein uS10m (155 aa).

This sequence belongs to the universal ribosomal protein uS10 family. In terms of assembly, component of the mitochondrial ribosome small subunit (28S) which comprises a 12S rRNA and about 30 distinct proteins.

Its subcellular location is the mitochondrion. This is Small ribosomal subunit protein uS10m (Mrps10) from Rattus norvegicus (Rat).